The following is a 715-amino-acid chain: ATP-dependent RecD2 DNA helicase (715 aa).

The interval 1–150 (MSAALPAEPF…STLHKMVSSW (150 aa)) is not required for helicase activity. ATP-binding positions include Q343 and 363–367 (GTGKS). 2 consecutive DNA-binding regions follow at residues G391 and 407-414 (TVHRLLGY). ATP is bound at residue Q466. A DNA-binding region is located at residue V470. Residue R493 participates in ATP binding. DNA-binding regions lie at residues 554–555 (RK), 596–604 (NDYNNEIFN), and 644–647 (TVHR). An ATP-binding site is contributed by R679.

The protein belongs to the RecD family. RecD2 subfamily. Monomer; homodimers seem to be inactive.

The enzyme catalyses Couples ATP hydrolysis with the unwinding of duplex DNA at the replication fork by translocating in the 5'-3' direction. This creates two antiparallel DNA single strands (ssDNA). The leading ssDNA polymer is the template for DNA polymerase III holoenzyme which synthesizes a continuous strand.. It catalyses the reaction ATP + H2O = ADP + phosphate + H(+). In terms of biological role, DNA-dependent ATPase (ssDNA stimulates the ATPase better than dsDNA) and ATP-dependent 5'-3' DNA helicase. Plays a role in an antioxidant pathway. Involved in DNA damage repair and/or recombination. Appears to move along DNA in single base steps, powered by hydrolysis of 1 molecule of ATP. Has low processivity, unwinds about 15-20 base pairs/second. Short (20 bp) substrates with 5'-overhangs or forked ends are the best substrates, is much less efficient on 52 or 76 bp substrates with 5'-overhangs. The presence of single-stranded DNA-binding protein (SSB) increases unwinding 4-5 fold. Has no activity on blunt DNA or DNA with 3'-overhangs. Requires at least 10 bases of 5'-ssDNA for helicase activity. This is ATP-dependent RecD2 DNA helicase from Deinococcus radiodurans (strain ATCC 13939 / DSM 20539 / JCM 16871 / CCUG 27074 / LMG 4051 / NBRC 15346 / NCIMB 9279 / VKM B-1422 / R1).